The following is a 471-amino-acid chain: UDP-N-acetylmuramoylalanine--D-glutamate ligase (471 aa).

Position 127–133 (127–133) interacts with ATP; that stretch reads GSNGKST.

It belongs to the MurCDEF family.

The protein resides in the cytoplasm. The enzyme catalyses UDP-N-acetyl-alpha-D-muramoyl-L-alanine + D-glutamate + ATP = UDP-N-acetyl-alpha-D-muramoyl-L-alanyl-D-glutamate + ADP + phosphate + H(+). The protein operates within cell wall biogenesis; peptidoglycan biosynthesis. Its function is as follows. Cell wall formation. Catalyzes the addition of glutamate to the nucleotide precursor UDP-N-acetylmuramoyl-L-alanine (UMA). The polypeptide is UDP-N-acetylmuramoylalanine--D-glutamate ligase (Colwellia psychrerythraea (strain 34H / ATCC BAA-681) (Vibrio psychroerythus)).